A 977-amino-acid chain; its full sequence is Glutamate receptor 2 (977 aa).

The first 19 residues, 1–19 (MNKNLLVFGFLIFVKIGET), serve as a signal peptide directing secretion. The Extracellular portion of the chain corresponds to 20-621 (SKKFPLRAFV…FSFMEPLGMT (602 aa)). Asn-36, Asn-227, Asn-291, Asn-427, Asn-532, and Asn-566 each carry an N-linked (GlcNAc...) asparagine glycan. Residues 622-642 (IWIFTLSSYFGVSLTIFLVSW) traverse the membrane as a helical segment. The Cytoplasmic segment spans residues 643–695 (FSPYEKRIEFKRGEFTVTNEFTLYNSLWFTLAAFMQQGTDILPRAVSGRIASS). The chain crosses the membrane as a helical span at residues 696-716 (CWWFFTLIIVSSYTANLAAFL). At 717 to 898 (TLERMTPPIE…GTSSSLNLSK (182 aa)) the chain is on the extracellular side. Asn-783 and Asn-895 each carry an N-linked (GlcNAc...) asparagine glycan. Residues 899–919 (VAGIFYILLAGMVLSMCTALV) traverse the membrane as a helical segment. The Cytoplasmic segment spans residues 920–977 (EFLFRKNKENREKERNRMRSSRPLKPGILASCERAKQKQLQNRRTKSEEVSTPRSTLF). The disordered stretch occupies residues 954 to 977 (AKQKQLQNRRTKSEEVSTPRSTLF).

It belongs to the glutamate-gated ion channel (TC 1.A.10.1) family. In terms of tissue distribution, command interneurons of the locomotory control circuit (AIA, AIB, AVA, AVD, AVE, PVC, RIA, RIG and RIR) and motor neurons (AVG, M1, RMDD and RMDV).

It localises to the membrane. The protein localises to the postsynaptic cell membrane. Functionally, L-glutamate acts as an excitatory neurotransmitter at many synapses in the central nervous system. The postsynaptic actions of glutamate are mediated by a variety of receptors that are named according to their selective agonists. Required for response to mechanical and osmotic stimuli. This chain is Glutamate receptor 2 (glr-2), found in Caenorhabditis elegans.